A 1513-amino-acid chain; its full sequence is MASSENEPFCVKFIKSPENSEYFFKAYEAIKQIQSDESLQLTEEREALLLKEKDKSLYICDPFSGAAFSHLKKLGCRIVGPQVVIFCMENQRRVPRAEYPVYNMAMADVTISCTSLDKETREDVHHYVQIMGGCVYRDLNVSVTHLIAGEVGSKKYLVAASLEKPILLPSWVKELWEKSNQRIIRYSDVNMTEYLCPIFRGCTICVTGLSSLDRKEVQRLTALHGGEYTGQLKMNESTHLIVQEAKGQKYECARKWNVHCISVQWFFDSIEKGFCQDETMYKIEPASTIKSVPDTSTPTGGNSKPNSRTLYDVSQISNISTSCVNESAFNSAMASRLDPPADTLENLDISSLQAPDDLLDGCRIYLCGFGGRKLDKLRKLINNGGGVRFNQLTGDVTHIIVGETDEELKQFLNKTQHRPYVLTVKWLLDSFAKGHLQPEEIYFHSSYQQTEMPSPFEPAINLTANKMSSTRDPLNHTRNHQADEDLLSQYTENNSTLIEDEHPKTSNTNSISQMSMHEDMTTCTSQSGLADTSTIIEGGLFSRKQFMVLGFLEEDEACIIDIIKKSAGKVLSSQKRAIADYAVVPLLGCEVESTVGEVVTNAWLGMCIEQEKLLDPHSNALFTPVPFLEGSTPLRECVLSVSQFMGAERDSLVYLAGLLGAKVQEFFVRKANPKKGMFASTHLVLKDAEGSKYEAAKKWNLPAVTMNWLLQCARTGRKADEDSYLVDNVPEEDKDESFISQTYKPQAIRLSMHAPCHLENHPEALTKAAVTPLDMNRFKSKAFQSVISQHNKNPQTSGGESKVLQREPSLHLDTPSKFLSKDKLFKPSFDVKDALAALETPGGPNQKNRTQSTPLSEVIGRNLQLAIANSTRQTAAVTASPQLKAAEKKEFDNSKLLINVVICVSKKLIKKQGELNGIAASLGAEYRWCFDESVTHFIYHGRQNDMSREYKSVKERSGIYIVSEHWLFACSEQQKRVPEALYPHTYNPKMSLDISAVQDGSYTASKFSADTSLQQDENSELQLQQNNKFGETSDDQVKKAAGDGNPQNPSKDVKGALTQTLEMRENFQRQLQEFMSATSVVKPRGSVGRAGFDNSPCTPEGARSTRNGRSRVLEALRQSRQAMTDLNTEPSQNEQIIWDDPTAREERAKLVSNLQWPDSPSQYSEQLQHNMNDAGGNYTPAKESLTDTEIAELEACEFEPKSAMRTPVIENNLQSPTKPDHLTPTPQAPSIAFPLANPPVAPQPREKPVQPFSKEETLKERRFQLSSLDPQERIDYSQLIEELGGVVIEKQCFDPSCTHIVVGHPLRNEKYLASMAAGKWVLHRSYLEACRAAKRFIQEEDYEWGSMSILSAVTNINPQQRMLAEAAMRWRKKLQGIKQNMGIAEGAFSGWKVILNVDQTKEPGFKRLLQSGGAKVFAGHSSPLFKEASHLFADFSKLKPDEPRVNVAEAAAQGVNCLKPEYIADYLMKELPPPMNNYCLPDAIPYVRVTGTGLSRKRKTSGDVSDVKRSRHY.

2 BRCT domains span residues 101–189 (VYNM…YSDV) and 194–283 (YLCP…MYKI). The interval 289-308 (IKSVPDTSTPTGGNSKPNSR) is disordered. 3 consecutive BRCT domains span residues 354–444 (APDD…IYFH), 530–621 (ADTS…SNAL), and 629–726 (EGST…SYLV). Over residues 789–799 (QHNKNPQTSGG) the composition is skewed to polar residues. A disordered region spans residues 789-809 (QHNKNPQTSGGESKVLQREPS). Residues 844-850 (PNQKNRT) carry the Nuclear localization signal motif. The 93-residue stretch at 892 to 984 (DNSKLLINVV…KRVPEALYPH (93 aa)) folds into the BRCT 6 domain. Disordered regions lie at residues 1031-1053 (ETSD…SKDV) and 1086-1109 (SVGR…RNGR). S1131 carries the phosphoserine modification. 2 consecutive BRCT domains span residues 1253–1344 (SKEE…DYEW) and 1383–1480 (IAEG…NYCL). The short motif at 1508–1511 (KRSR) is the Nuclear localization signal element.

The protein belongs to the TOPBP1 family. In terms of assembly, interacts with cdc45. Interacts (via BRCT domains) with ticrr; interaction is cdk2-dependent. Interacts with atr in the presence of atrip. Interacts with recql4 (via N-terminus). Interacts with gmnc. Interacts with cip2a; forming the CIP2A-TOPBP1 complex. Phosphorylation at Ser-1131 is essential for phosphorylation of chek1, and thus for checkpoint regulation.

It localises to the nucleus. The protein localises to the chromosome. Its subcellular location is the cytoplasm. The protein resides in the cytoskeleton. It is found in the microtubule organizing center. It localises to the centrosome. The protein localises to the spindle pole. Functionally, scaffold protein that acts as a key protein-protein adapter in DNA replication and DNA repair. Composed of multiple BRCT domains, which specifically recognize and bind phosphorylated proteins, bringing proteins together into functional combinations. Required for DNA replication initiation but not for the formation of pre-replicative complexes or the elongation stages. Necessary for the loading of replication factors onto chromatin, including gmnc, cdc45, DNA polymerases and components of the GINS complex such as ginsl/sld5. Plays a central role in DNA repair by bridging proteins and promoting recruitment of proteins to DNA damage sites. Involved in double-strand break (DSB) repair via homologous recombination in S-phase by promoting the exchange between the DNA replication factor A (RPA) complex and RAD51. Involved in microhomology-mediated end-joining (MMEJ) DNA repair by promoting recruitment of polymerase theta (POLQ) to DNA damage sites during mitosis. In response to DNA damage, triggers the recruitment of checkpoint signaling proteins on chromatin, which activate the chek1 signaling pathway and block S-phase progression. Increases the kinase activity of atr to numerous substrates, and is required for the phosphorylation of Rad1. Together with cip2a, plays an essential role in the response to genome instability generated by the presence of acentric chromosome fragments derived from shattered chromosomes within micronuclei. The CIP2A-TOPBP1 complex tethers chromosome fragments during mitosis to ensure clustered segregation of the fragments to a single daughter cell nucleus, facilitating re-ligation with limited chromosome scattering and loss. The polypeptide is DNA topoisomerase 2-binding protein 1-A (topbp1-A) (Xenopus laevis (African clawed frog)).